Reading from the N-terminus, the 304-residue chain is 4-diphosphocytidyl-2-C-methyl-D-erythritol kinase (304 aa).

The active site involves K20. 106–116 (PVASGIGGGSG) contributes to the ATP binding site. D148 is a catalytic residue.

The protein belongs to the GHMP kinase family. IspE subfamily.

The catalysed reaction is 4-CDP-2-C-methyl-D-erythritol + ATP = 4-CDP-2-C-methyl-D-erythritol 2-phosphate + ADP + H(+). It functions in the pathway isoprenoid biosynthesis; isopentenyl diphosphate biosynthesis via DXP pathway; isopentenyl diphosphate from 1-deoxy-D-xylulose 5-phosphate: step 3/6. In terms of biological role, catalyzes the phosphorylation of the position 2 hydroxy group of 4-diphosphocytidyl-2C-methyl-D-erythritol. This chain is 4-diphosphocytidyl-2-C-methyl-D-erythritol kinase, found in Bartonella bacilliformis (strain ATCC 35685 / KC583 / Herrer 020/F12,63).